Consider the following 81-residue polypeptide: Protein Vpu (81 aa).

The Extracellular portion of the chain corresponds to 1-7 (MQPLQIL). The chain crosses the membrane as a helical span at residues 8–28 (SIVALVVAAIIAIVVWSIVFI). Residues 29–81 (LIRKILRQRKIDRLIDRIRERAEDSGNESEGIRKELSALVEMGHDAPGDIDDL) are Cytoplasmic-facing. S53 and S57 each carry phosphoserine; by host CK2.

It belongs to the HIV-1 VPU protein family. In terms of assembly, homopentamer. Interacts with host CD4 and BRTC; these interactions induce proteasomal degradation of CD4. Interacts with host BST2; this interaction leads to the degradation of host BST2. Interacts with host FBXW11. Interacts with host AP1M1; this interaction plays a role in the mistrafficking and subsequent degradation of host BST2. Interacts with host RANBP2; this interaction allows Vpu to down-regulate host BLM sumoylation. Post-translationally, phosphorylated by host CK2. This phosphorylation is necessary for interaction with human BTRC and degradation of CD4.

Its subcellular location is the host membrane. Its activity is regulated as follows. Ion channel activity is inhibited by hexamethylene amiloride in vitro. Functionally, enhances virion budding by targeting host CD4 and Tetherin/BST2 to proteasome degradation. Degradation of CD4 prevents any unwanted premature interactions between viral Env and its host receptor CD4 in the endoplasmic reticulum. Degradation of antiretroviral protein Tetherin/BST2 is important for virion budding, as BST2 tethers new viral particles to the host cell membrane. Mechanistically, Vpu bridges either CD4 or BST2 to BTRC, a substrate recognition subunit of the Skp1/Cullin/F-box protein E3 ubiquitin ligase, induces their ubiquitination and subsequent proteasomal degradation. The alteration of the E3 ligase specificity by Vpu seems to promote the degradation of host IKBKB, leading to NF-kappa-B down-regulation and subsequent apoptosis. Acts as a viroporin that forms an oligomeric ion channel in membranes. Modulates the host DNA repair mechanisms to promote degradation of nuclear viral cDNA in cells that are already productively infected in order to suppress immune sensing and proviral hyper-integration (superinfection). Manipulates PML-NBs and modulates SUMOylation of host BLM protein thereby enhancing its DNA-end processing activity toward viral unintegrated linear DNA. Also inhibits RAD52-mediated homologous repair of viral cDNA, preventing the generation of dead-end circular forms of single copies of the long terminal repeat and permitting sustained nucleolytic attack. This Homo sapiens (Human) protein is Protein Vpu.